Consider the following 263-residue polypeptide: Endonuclease 8 (263 aa).

Catalysis depends on proline 2, which acts as the Schiff-base intermediate with DNA. Residue glutamate 3 is the Proton donor of the active site. Lysine 53 serves as the catalytic Proton donor; for beta-elimination activity. 3 residues coordinate DNA: glutamine 70, arginine 125, and asparagine 169. The FPG-type zinc-finger motif lies at 229–263 (KVFHRDGEPCERCGSIIEKTTLSSRPFYWCPGCQH). Residue arginine 253 is the Proton donor; for delta-elimination activity of the active site.

This sequence belongs to the FPG family. It depends on Zn(2+) as a cofactor.

The enzyme catalyses 2'-deoxyribonucleotide-(2'-deoxyribose 5'-phosphate)-2'-deoxyribonucleotide-DNA = a 3'-end 2'-deoxyribonucleotide-(2,3-dehydro-2,3-deoxyribose 5'-phosphate)-DNA + a 5'-end 5'-phospho-2'-deoxyribonucleoside-DNA + H(+). Involved in base excision repair of DNA damaged by oxidation or by mutagenic agents. Acts as a DNA glycosylase that recognizes and removes damaged bases. Has a preference for oxidized pyrimidines, such as thymine glycol, 5,6-dihydrouracil and 5,6-dihydrothymine. Has AP (apurinic/apyrimidinic) lyase activity and introduces nicks in the DNA strand. Cleaves the DNA backbone by beta-delta elimination to generate a single-strand break at the site of the removed base with both 3'- and 5'-phosphates. The sequence is that of Endonuclease 8 from Escherichia coli O9:H4 (strain HS).